The chain runs to 774 residues: C6 finger domain transcription factor nscR (774 aa).

A DNA-binding region (zn(2)-C6 fungal-type) is located at residues 17–43; sequence CELCRERKIKCDKVDPCNNCVSAGVVC. Disordered regions lie at residues 61-94, 536-559, and 665-697; these read RPMS…SGAV, LQLP…PQEH, and PTFS…SDLS. Positions 67 to 78 are enriched in pro residues; it reads FVPPRAPTPVAG. Positions 536-548 are enriched in low complexity; it reads LQLPQPSNGSSQP. Over residues 665 to 674 the composition is skewed to polar residues; it reads PTFSLGSSTG. Residues 675–697 are compositionally biased toward low complexity; sequence TSAAPTPRSRASSTPSDTLSDLS.

The protein resides in the nucleus. In terms of biological role, transcription factor that specifically regulates the neosartoricin biosynthesis gene cluster. The protein is C6 finger domain transcription factor nscR of Aspergillus fumigatus (strain ATCC MYA-4609 / CBS 101355 / FGSC A1100 / Af293) (Neosartorya fumigata).